Here is a 205-residue protein sequence, read N- to C-terminus: Holliday junction branch migration complex subunit RuvA (205 aa).

The segment at 1–64 is domain I; that stretch reads MIGRLRGIVL…EDAQLLYGFN (64 aa). Residues 65–143 are domain II; the sequence is DKQERALFRE…GLNGDLFNQS (79 aa). Positions 144–156 are flexible linker; sequence SDINLPATAKQTT. Residues 157–205 form a domain III region; it reads SDADSEAEAAAALVSLGYKPQEASRMVSKIAKPGADCETLIREALRAVL.

It belongs to the RuvA family. In terms of assembly, homotetramer. Forms an RuvA(8)-RuvB(12)-Holliday junction (HJ) complex. HJ DNA is sandwiched between 2 RuvA tetramers; dsDNA enters through RuvA and exits via RuvB. An RuvB hexamer assembles on each DNA strand where it exits the tetramer. Each RuvB hexamer is contacted by two RuvA subunits (via domain III) on 2 adjacent RuvB subunits; this complex drives branch migration. In the full resolvosome a probable DNA-RuvA(4)-RuvB(12)-RuvC(2) complex forms which resolves the HJ.

Its subcellular location is the cytoplasm. The RuvA-RuvB-RuvC complex processes Holliday junction (HJ) DNA during genetic recombination and DNA repair, while the RuvA-RuvB complex plays an important role in the rescue of blocked DNA replication forks via replication fork reversal (RFR). RuvA specifically binds to HJ cruciform DNA, conferring on it an open structure. The RuvB hexamer acts as an ATP-dependent pump, pulling dsDNA into and through the RuvAB complex. HJ branch migration allows RuvC to scan DNA until it finds its consensus sequence, where it cleaves and resolves the cruciform DNA. The sequence is that of Holliday junction branch migration complex subunit RuvA from Photorhabdus laumondii subsp. laumondii (strain DSM 15139 / CIP 105565 / TT01) (Photorhabdus luminescens subsp. laumondii).